A 380-amino-acid polypeptide reads, in one-letter code: Chaperone protein DnaJ (380 aa).

In terms of domain architecture, J spans 5 to 70 (DYYEVLGLQK…EKRAAYDQYG (66 aa)). The CR-type zinc-finger motif lies at 136-214 (GCKKDIRIST…CHGDGRVQKA (79 aa)). The Zn(2+) site is built by C149, C152, C166, C169, C188, C191, C202, and C205. 4 CXXCXGXG motif repeats span residues 149 to 156 (CDTCHGSG), 166 to 173 (CSHCHGSG), 188 to 195 (CPSCHGSG), and 202 to 209 (CKSCHGDG).

This sequence belongs to the DnaJ family. In terms of assembly, homodimer. Requires Zn(2+) as cofactor.

Its subcellular location is the cytoplasm. Its function is as follows. Participates actively in the response to hyperosmotic and heat shock by preventing the aggregation of stress-denatured proteins and by disaggregating proteins, also in an autonomous, DnaK-independent fashion. Unfolded proteins bind initially to DnaJ; upon interaction with the DnaJ-bound protein, DnaK hydrolyzes its bound ATP, resulting in the formation of a stable complex. GrpE releases ADP from DnaK; ATP binding to DnaK triggers the release of the substrate protein, thus completing the reaction cycle. Several rounds of ATP-dependent interactions between DnaJ, DnaK and GrpE are required for fully efficient folding. Also involved, together with DnaK and GrpE, in the DNA replication of plasmids through activation of initiation proteins. The chain is Chaperone protein DnaJ from Actinobacillus pleuropneumoniae serotype 5b (strain L20).